The following is a 692-amino-acid chain: DNA ligase (692 aa).

Residues 34 to 38 (DAEYD), 83 to 84 (SL), and E124 contribute to the NAD(+) site. K126 functions as the N6-AMP-lysine intermediate in the catalytic mechanism. Residues R147, E193, K310, and K334 each coordinate NAD(+). Zn(2+) is bound by residues C428, C431, C446, and C452. The BRCT domain maps to 612 to 692 (AGVAGVSGKT…ALLALLAGNA (81 aa)).

The protein belongs to the NAD-dependent DNA ligase family. LigA subfamily. Requires Mg(2+) as cofactor. Mn(2+) is required as a cofactor.

The enzyme catalyses NAD(+) + (deoxyribonucleotide)n-3'-hydroxyl + 5'-phospho-(deoxyribonucleotide)m = (deoxyribonucleotide)n+m + AMP + beta-nicotinamide D-nucleotide.. Its function is as follows. DNA ligase that catalyzes the formation of phosphodiester linkages between 5'-phosphoryl and 3'-hydroxyl groups in double-stranded DNA using NAD as a coenzyme and as the energy source for the reaction. It is essential for DNA replication and repair of damaged DNA. This is DNA ligase from Laribacter hongkongensis (strain HLHK9).